Reading from the N-terminus, the 133-residue chain is ATP synthase epsilon chain (133 aa).

Belongs to the ATPase epsilon chain family. F-type ATPases have 2 components, CF(1) - the catalytic core - and CF(0) - the membrane proton channel. CF(1) has five subunits: alpha(3), beta(3), gamma(1), delta(1), epsilon(1). CF(0) has three main subunits: a, b and c.

It localises to the cell membrane. Produces ATP from ADP in the presence of a proton gradient across the membrane. The protein is ATP synthase epsilon chain of Geobacillus thermodenitrificans (strain NG80-2).